The sequence spans 500 residues: Probable transcription factor FPSE_09189 (500 aa).

2 disordered regions span residues 161 to 197 (MVRHLSNHPPSGTVPVGPCSRPEPSRASQRPEPPSLA) and 457 to 500 (IRTG…TQLE). The span at 459 to 474 (TGHEDSSRDGGRENKA) shows a compositional bias: basic and acidic residues. A compositionally biased stretch (polar residues) spans 475-484 (MNRNRSTGNS).

Its subcellular location is the nucleus. The two putative transcription factors FPSE_09188 and FPSE_09189 could be responsible for orchestrating expression of the W493 A and B biosynthesis cluster genes. W493 A and B consist of six amino acid residues D-allo-thr, L-Ala, D-Ala, L-Gln, D-Tyr, and L-Val/L-Ile linked to a 3-hydroxy-4-methyltetradecanoic acid polyketide chain. The polypeptide is Probable transcription factor FPSE_09189 (Fusarium pseudograminearum (strain CS3096) (Wheat and barley crown-rot fungus)).